The chain runs to 174 residues: Co-chaperone protein HscB (174 aa).

One can recognise a J domain in the interval 2–74 (NYFTLFDLPR…LNRAIYFLCL (73 aa)).

The protein belongs to the HscB family. Interacts with HscA and stimulates its ATPase activity. Interacts with IscU.

Co-chaperone involved in the maturation of iron-sulfur cluster-containing proteins. Seems to help targeting proteins to be folded toward HscA. This is Co-chaperone protein HscB from Buchnera aphidicola subsp. Acyrthosiphon pisum (strain Tuc7).